The chain runs to 157 residues: RNA-binding protein 3 (157 aa).

In terms of domain architecture, RRM spans 6–84 (GKLFVGGLNF…RQIRVDHAGK (79 aa)). An Omega-N-methylarginine modification is found at Arg47. The segment at 81–157 (HAGKSARGTR…GGNYRDNYDN (77 aa)) is disordered. Arg105 carries the post-translational modification Asymmetric dimethylarginine; alternate. Position 105 is a dimethylated arginine; in A2780 ovarian carcinoma cell line (Arg105). At Arg105 the chain carries Omega-N-methylarginine; alternate. Residues 105–114 (RGGGDQGYGS) show a composition bias toward gly residues. Arg121 and Arg131 each carry omega-N-methylarginine. At Ser147 the chain carries Phosphoserine. A Phosphotyrosine modification is found at Tyr155.

Interacts with RPL4. Associates with the 60S ribosomal subunits in an RNA-independent manner. Associates with ribosomes. Post-translationally, arg-105 is dimethylated, probably to asymmetric dimethylarginine. In terms of processing, phosphorylated.

The protein resides in the nucleus. The protein localises to the cytoplasm. It localises to the cell projection. It is found in the dendrite. In terms of biological role, cold-inducible mRNA binding protein that enhances global protein synthesis at both physiological and mild hypothermic temperatures. Reduces the relative abundance of microRNAs, when overexpressed. Enhances phosphorylation of translation initiation factors and active polysome formation. The chain is RNA-binding protein 3 (RBM3) from Homo sapiens (Human).